The sequence spans 344 residues: Hypoxia-inducible factor 1-alpha inhibitor (344 aa).

Residue Ala2 is modified to N-acetylalanine. The region spanning 133-303 (GRVYLQQTLN…PKRIEYPLKA (171 aa)) is the JmjC domain. Tyr136 lines the 2-oxoglutarate pocket. Residues Asp143 and 173-174 (LT) each bind substrate. Residue Thr187 coordinates 2-oxoglutarate. His190 and Asp192 together coordinate Fe cation. 192-194 (DEQ) is a substrate binding site. Asn196 and Lys205 together coordinate 2-oxoglutarate. 229 to 230 (RQ) lines the substrate pocket. His270 is a binding site for Fe cation. Asn285 is a binding site for 2-oxoglutarate. 2 residues coordinate substrate: Ala291 and Asn312.

As to quaternary structure, homodimer; homodimerization is essential for catalytic activity. Fe(2+) serves as cofactor.

It is found in the nucleus. It localises to the cytoplasm. Its subcellular location is the perinuclear region. It catalyses the reaction L-asparaginyl-[hypoxia-inducible factor alpha subunit] + 2-oxoglutarate + O2 = (3S)-3-hydroxy-L-asparaginyl-[hypoxia-inducible factor alpha subunit] + succinate + CO2. It carries out the reaction L-histidyl-[ankyrin-repeat domain protein] + 2-oxoglutarate + O2 = (3S)-3-hydroxy-L-histidyl-[ankyrin-repeat domain protein] + succinate + CO2. The catalysed reaction is L-asparaginyl-[ankyrin-repeat domain protein] + 2-oxoglutarate + O2 = (3S)-3-hydroxy-L-asparaginyl-[ankyrin-repeat domain protein] + succinate + CO2. The enzyme catalyses L-aspartyl-[ankyrin-repeat domain protein] + 2-oxoglutarate + O2 = (3S)-3-hydroxy-L-aspartyl-[ankyrin-repeat domain protein] + succinate + CO2. Its function is as follows. Hydroxylates a specific Asn residue in the C-terminal transactivation domain (CAD) of HIF-1 alpha. The hydroxylation prevents interaction of HIF-1 with transcriptional coactivators. Also hydroxylates specific Asn, Asp and His residues within ankyrin repeat domain-containing proteins. This Danio rerio (Zebrafish) protein is Hypoxia-inducible factor 1-alpha inhibitor (hif1an).